We begin with the raw amino-acid sequence, 1043 residues long: Isoleucine--tRNA ligase (1043 aa).

The L-isoleucyl-5'-AMP site is built by Pro-46 and His-57. Positions 47–57 match the 'HIGH' region motif; the sequence is PTANGLPHVGH. The Zn(2+) site is built by Cys-181 and Cys-184. Residues His-319 and Asp-328 each coordinate L-valine. Cys-389, Cys-392, Cys-461, Cys-464, Cys-502, and Cys-504 together coordinate Zn(2+). Glu-550, Gly-551, Asp-553, Gln-554, and His-581 together coordinate L-isoleucyl-5'-AMP. The 'KMSKS' region motif lies at 591 to 595; the sequence is KMSKS. ATP is bound at residue Lys-594.

It belongs to the class-I aminoacyl-tRNA synthetase family. IleS type 2 subfamily. In terms of assembly, monomer. Zn(2+) serves as cofactor.

It is found in the cytoplasm. The enzyme catalyses tRNA(Ile) + L-isoleucine + ATP = L-isoleucyl-tRNA(Ile) + AMP + diphosphate. Catalyzes the attachment of isoleucine to tRNA(Ile). As IleRS can inadvertently accommodate and process structurally similar amino acids such as valine, to avoid such errors it has two additional distinct tRNA(Ile)-dependent editing activities. One activity is designated as 'pretransfer' editing and involves the hydrolysis of activated Val-AMP. The other activity is designated 'posttransfer' editing and involves deacylation of mischarged Val-tRNA(Ile). In Thermus thermophilus (strain ATCC 27634 / DSM 579 / HB8), this protein is Isoleucine--tRNA ligase (ileS).